The chain runs to 300 residues: Probable protein phosphatase 2C 2 (300 aa).

The PPM-type phosphatase domain maps to 23–298; that stretch reads IFAASEMQGW…DNMTTILVYL (276 aa). D57, G58, D237, and D289 together coordinate Mn(2+).

This sequence belongs to the PP2C family. Requires Mg(2+) as cofactor. It depends on Mn(2+) as a cofactor.

Its subcellular location is the membrane. The enzyme catalyses O-phospho-L-seryl-[protein] + H2O = L-seryl-[protein] + phosphate. It carries out the reaction O-phospho-L-threonyl-[protein] + H2O = L-threonyl-[protein] + phosphate. Functionally, enzyme with a broad specificity. The sequence is that of Probable protein phosphatase 2C 2 from Paramecium tetraurelia.